The primary structure comprises 357 residues: Protein RecA (357 aa).

67–74 (GPESSGKT) serves as a coordination point for ATP. A disordered region spans residues 334 to 357 (ELKPAAAGNSHDEDELAGEGKEEF).

Belongs to the RecA family.

Its subcellular location is the cytoplasm. Can catalyze the hydrolysis of ATP in the presence of single-stranded DNA, the ATP-dependent uptake of single-stranded DNA by duplex DNA, and the ATP-dependent hybridization of homologous single-stranded DNAs. It interacts with LexA causing its activation and leading to its autocatalytic cleavage. The chain is Protein RecA from Pectobacterium atrosepticum (strain SCRI 1043 / ATCC BAA-672) (Erwinia carotovora subsp. atroseptica).